Here is a 338-residue protein sequence, read N- to C-terminus: Probable tRNA pseudouridine synthase B (338 aa).

Residue D78 is the Nucleophile of the active site. Residues L245–M320 enclose the PUA domain.

This sequence belongs to the pseudouridine synthase TruB family. Type 2 subfamily.

It carries out the reaction uridine(55) in tRNA = pseudouridine(55) in tRNA. In terms of biological role, could be responsible for synthesis of pseudouridine from uracil-55 in the psi GC loop of transfer RNAs. This is Probable tRNA pseudouridine synthase B from Methanosarcina mazei (strain ATCC BAA-159 / DSM 3647 / Goe1 / Go1 / JCM 11833 / OCM 88) (Methanosarcina frisia).